The primary structure comprises 442 residues: MKCQLLFVATVCLASVWALPVPDEEVAIQPDSGAKAELLTKTVLPTAVEPAPLKPEAEKPAETKTIEAKAAVPEQPDVNANPSPSTPAAEPAKEINSVELKSSAPDVETAPAIPEKKTLPEEAKPAQENAPVEAEKKQEKTARTEAEPTVEAQPQATKAIEQAPEAPAANAEVQKQVVDEVKPQEPKIDAKSAEEPAIPAVVAAEKETPVPEQPARQERINEIEQKDAKKDAAVAEEPAKAAEATPTAAPEAATKSDSNIQVIAPEKKSIESSPAAAAASPAAQAAQAKSGEAPKPVDQQKSTETVAESAPVLKTNAPLAPAGATKVTEAVKEQEKEQPAADTAAKALPEQKKTEETAAPAGAPEPTAAVAPAAVPEAKKIDEAPAAETVVKGEEAIAKPIAQSPSAEPKKSSEEKSDKSESKVDESSESKESEESSESKEN.

The disordered stretch occupies residues 47–442 (AVEPAPLKPE…SEESSESKEN (396 aa)). Basic and acidic residues-rich tracts occupy residues 55-67 (PEAE…KTIE), 114-125 (PEKKTLPEEAKP), and 133-146 (EAEK…RTEA). The segment covering 159–172 (AIEQAPEAPAANAE) has biased composition (low complexity). Basic and acidic residues-rich tracts occupy residues 177 to 194 (VVDE…KSAE) and 204 to 240 (AEKE…EPAK). Composition is skewed to low complexity over residues 241 to 255 (AAEA…AATK) and 272 to 288 (SSPA…AAQA). Residues 329–339 (EAVKEQEKEQP) are compositionally biased toward basic and acidic residues. Residues 357-376 (TAAPAGAPEPTAAVAPAAVP) are compositionally biased toward low complexity. A compositionally biased stretch (basic and acidic residues) spans 408-442 (EPKKSSEEKSDKSESKVDESSESKESEESSESKEN). Phosphoserine occurs at positions 430, 433, 436, and 437.

Expressed in the embryonic CNS, in sets of cells that are segmentally reiterated along the periphery of the nervous system.

May play an important role during development. In Drosophila melanogaster (Fruit fly), this protein is Protein bangles and beads (bnb).